Consider the following 429-residue polypeptide: tRNA threonylcarbamoyladenosine dehydratase 1 (429 aa).

Transmembrane regions (helical) follow at residues 3–23 and 74–94; these read NNTW…TQLA and EQYI…TMLI. Ser259 is modified (phosphoserine). A helical membrane pass occupies residues 279 to 299; that stretch reads LPELGTMPGIFGLSIATWILT.

It belongs to the HesA/MoeB/ThiF family.

Its subcellular location is the mitochondrion outer membrane. Catalyzes the ATP-dependent dehydration of threonylcarbamoyladenosine at position 37 (t(6)A37) to form cyclic t(6)A37 (ct(6)A37) in tRNAs that read codons beginning with adenine. The chain is tRNA threonylcarbamoyladenosine dehydratase 1 (TCD1) from Saccharomyces cerevisiae (strain ATCC 204508 / S288c) (Baker's yeast).